The chain runs to 107 residues: UPF0060 membrane protein glr4174 (107 aa).

The next 4 helical transmembrane spans lie at 1-21 (MALL…FAFW), 26-46 (LGKN…FAWL), 58-78 (AYAA…WLVE), and 87-107 (LAGA…DRSP).

Belongs to the UPF0060 family.

It is found in the cell inner membrane. The protein is UPF0060 membrane protein glr4174 of Gloeobacter violaceus (strain ATCC 29082 / PCC 7421).